Reading from the N-terminus, the 149-residue chain is Urease accessory protein UreE (149 aa).

Belongs to the UreE family.

Its subcellular location is the cytoplasm. In terms of biological role, involved in urease metallocenter assembly. Binds nickel. Probably functions as a nickel donor during metallocenter assembly. This is Urease accessory protein UreE from Ruegeria pomeroyi (strain ATCC 700808 / DSM 15171 / DSS-3) (Silicibacter pomeroyi).